A 605-amino-acid chain; its full sequence is Arginine--tRNA ligase (605 aa).

A 'HIGH' region motif is present at residues 131-141; that stretch reads ANPTGPMHVGH. The interval 290 to 309 is disordered; the sequence is PPPKSKKGQPAPAQAASNSA. Residues 298–309 show a composition bias toward low complexity; it reads QPAPAQAASNSA.

This sequence belongs to the class-I aminoacyl-tRNA synthetase family. As to quaternary structure, monomer.

Its subcellular location is the cytoplasm. The enzyme catalyses tRNA(Arg) + L-arginine + ATP = L-arginyl-tRNA(Arg) + AMP + diphosphate. In Anaeromyxobacter sp. (strain Fw109-5), this protein is Arginine--tRNA ligase.